A 549-amino-acid chain; its full sequence is Glucose-6-phosphate isomerase (549 aa).

Lysine 80, lysine 228, and lysine 234 each carry N6-acetyllysine. The active-site Proton donor is the glutamate 355. Active-site residues include histidine 386 and lysine 514.

Belongs to the GPI family.

Its subcellular location is the cytoplasm. The catalysed reaction is alpha-D-glucose 6-phosphate = beta-D-fructose 6-phosphate. Its pathway is carbohydrate biosynthesis; gluconeogenesis. The protein operates within carbohydrate degradation; glycolysis; D-glyceraldehyde 3-phosphate and glycerone phosphate from D-glucose: step 2/4. Functionally, catalyzes the reversible isomerization of glucose-6-phosphate to fructose-6-phosphate. In Escherichia coli O17:K52:H18 (strain UMN026 / ExPEC), this protein is Glucose-6-phosphate isomerase.